We begin with the raw amino-acid sequence, 374 residues long: Alpha-N-acetylgalactosaminide alpha-2,6-sialyltransferase 2 (374 aa).

Residues 1–7 (MGLPRGS) are Cytoplasmic-facing. The helical; Signal-anchor for type II membrane protein transmembrane segment at 8-28 (FFWLLLLLTAACSGLLFALYF) threads the bilayer. Over 29-374 (SAVQRYPGPA…KAGILQLYQR (346 aa)) the chain is Lumenal. Disulfide bonds link cysteine 66/cysteine 148 and cysteine 151/cysteine 317. Residues asparagine 85 and asparagine 130 are each glycosylated (N-linked (GlcNAc...) asparagine). Asparagine 156 contacts CMP-N-acetyl-beta-neuraminate. Residue asparagine 161 is glycosylated (N-linked (GlcNAc...) asparagine). The CMP-N-acetyl-beta-neuraminate site is built by asparagine 179, serine 304, and histidine 336.

The protein belongs to the glycosyltransferase 29 family. As to expression, expressed in skeletal muscle, heart, kidney, placenta, lung and leukocytes.

The protein resides in the golgi apparatus membrane. The catalysed reaction is a beta-D-galactosyl-(1-&gt;3)-N-acetyl-alpha-D-galactosaminyl derivative + CMP-N-acetyl-beta-neuraminate = a beta-D-galactosyl-(1-&gt;3)-[N-acetyl-alpha-neuraminyl-(2-&gt;6)]-N-acetyl-alpha-D-galactosaminyl derivative + CMP + H(+). It carries out the reaction a 3-O-[N-acetyl-alpha-D-galactosaminyl]-L-threonyl-[protein] + CMP-N-acetyl-beta-neuraminate = a 3-O-[N-acetyl-alpha-neuraminosyl-(2-&gt;6)-N-acetyl-alpha-D-galactosaminyl]-L-threonyl-[protein] + CMP + H(+). It catalyses the reaction a 3-O-[N-acetyl-alpha-neuraminyl-(2-&gt;3)-beta-D-galactosyl-(1-&gt;3)-N-acetyl-alpha-D-galactosaminyl]-L-threonyl-[protein] + CMP-N-acetyl-beta-neuraminate = a 3-O-{alpha-Neu5Ac-(2-&gt;3)-beta-D-Gal-(1-&gt;3)-[alpha-Neu5Ac-(2-&gt;6)]-alpha-D-GalNAc}-L-threonyl-[protein] + CMP + H(+). The protein operates within protein modification; protein glycosylation. Its function is as follows. Catalyzes the transfer of N-acetylneuraminyl groups onto glycan chains in glycoproteins. Conjugates sialic acid with an alpha-2-6 linkage to N-acetylgalactosamine (GalNAc) glycan chains linked to serine or threonine in glycoproteins. Sialylates alphaGalNAc- and Galbeta1-&gt;3GalNAc-O-Ser/Thr epitopes also known as Tn and T antigens. This chain is Alpha-N-acetylgalactosaminide alpha-2,6-sialyltransferase 2 (ST6GALNAC2), found in Homo sapiens (Human).